Consider the following 552-residue polypeptide: Protoheme IX farnesyltransferase, mitochondrial (552 aa).

A disordered region spans residues 118 to 185 (AADIPPSTST…PSGEIPPDAS (68 aa)). Over residues 150-168 (EQAASASSNAPSEAAQTTP) the composition is skewed to low complexity. Helical transmembrane passes span 215–235 (LTML…VPDF), 245–267 (LSPL…ANAL), 296–316 (AAVC…QFGV), 318–338 (PTVA…YTPL), 346–366 (TWVG…AAAG), 387–407 (AGGW…FMAL), 441–461 (VFVP…SFAV), and 487–507 (ARGL…LALL).

The protein belongs to the UbiA prenyltransferase family.

It is found in the mitochondrion membrane. It carries out the reaction heme b + (2E,6E)-farnesyl diphosphate + H2O = Fe(II)-heme o + diphosphate. Functionally, converts protoheme IX and farnesyl diphosphate to heme O. This chain is Protoheme IX farnesyltransferase, mitochondrial (COX10), found in Pyricularia oryzae (strain 70-15 / ATCC MYA-4617 / FGSC 8958) (Rice blast fungus).